A 1029-amino-acid polypeptide reads, in one-letter code: U2 snRNP-associated SURP motif-containing protein (1029 aa).

Disordered stretches follow at residues 1–110 (MADK…KEDE) and 141–273 (VNAA…DPST). N-acetylalanine is present on Ala-2. A compositionally biased stretch (polar residues) spans 7 to 16 (GGSQKASSKN). Residues 45 to 54 (TRPKSPRKHN) show a composition bias toward basic residues. Residues 55-64 (YRNESSRESL) are compositionally biased toward basic and acidic residues. Ser-67 carries the post-translational modification Phosphoserine. Lys-80 participates in a covalent cross-link: Glycyl lysine isopeptide (Lys-Gly) (interchain with G-Cter in SUMO2). Residues 92–121 (AKRTLSKKEQEELKKKEDEKAAAEIYEEFL) are a coiled coil. Basic and acidic residues-rich tracts occupy residues 97–110 (SKKE…KEDE) and 144–155 (AKDEHETDEKRG). Residues Lys-145 and Lys-168 each participate in a glycyl lysine isopeptide (Lys-Gly) (interchain with G-Cter in SUMO2) cross-link. Residues 169-178 (NPPNQSSNER) show a composition bias toward polar residues. A compositionally biased stretch (basic and acidic residues) spans 186 to 222 (ETKKPPLKKGEKEKKKSNLELFKEELKQIQEERDERH). A coiled-coil region spans residues 192–232 (LKKGEKEKKKSNLELFKEELKQIQEERDERHKTKGRLSRFE). At Ser-202 the chain carries Phosphoserine. Lys-208 is covalently cross-linked (Glycyl lysine isopeptide (Lys-Gly) (interchain with G-Cter in SUMO2)). Residue Ser-236 is modified to Phosphoserine. Residues 239-249 (DGQRRSMDVPS) are compositionally biased toward basic and acidic residues. Residues 274-355 (TNLYLGNINP…FEMKLGWGKA (82 aa)) enclose the RRM domain. The stretch at 430–473 (LIHRMIEFVVREGPMFEAMIMNREINNPMFRFLFENQTPAHVYY) is one SURP motif repeat. Ser-485 bears the Phosphoserine mark. The CID domain occupies 534–679 (LKEEQRDKLE…KLQNIFLGLV (146 aa)). The interval 704 to 729 (DGAPLEDVDGIPIDATPIDDLDGVPI) is disordered. At Thr-719 the chain carries Phosphothreonine. Glycyl lysine isopeptide (Lys-Gly) (interchain with G-Cter in SUMO2) cross-links involve residues Lys-748 and Lys-749. Lys-760 bears the N6-acetyllysine; alternate mark. Lys-760 participates in a covalent cross-link: Glycyl lysine isopeptide (Lys-Gly) (interchain with G-Cter in SUMO2); alternate. Disordered stretches follow at residues 778–841 (KWEL…EEKR) and 855–1029 (QDEL…KNKH). Over residues 786–806 (EESEEEENQNQEEESEDEEDT) the composition is skewed to acidic residues. 3 positions are modified to phosphoserine: Ser-788, Ser-800, and Ser-811. Basic and acidic residues-rich tracts occupy residues 810–841 (KSEE…EEKR) and 874–922 (QVEH…TPTR). Residues Lys-829 and Lys-832 each participate in a glycyl lysine isopeptide (Lys-Gly) (interchain with G-Cter in SUMO2) cross-link. Residues 837–915 (SEEKRAKLRE…ESRSKDKKEK (79 aa)) are a coiled coil. Residue Thr-931 is modified to Phosphothreonine. Phosphoserine is present on residues Ser-946 and Ser-948. The span at 950–980 (KSERSERSERSHKESSRSRSSHKDSPRDASK) shows a compositional bias: basic and acidic residues. Basic residues predominate over residues 991-1029 (TPKRSRRSRSRSPKKSGKKSRSQSRSPHRSHKKSKKNKH).

This sequence belongs to the splicing factor SR family. As to quaternary structure, interacts with ERBB4.

Its subcellular location is the nucleus. The chain is U2 snRNP-associated SURP motif-containing protein (U2surp) from Mus musculus (Mouse).